Consider the following 390-residue polypeptide: S-adenosylmethionine synthase 3 (390 aa).

Position 9 (E9) interacts with Mg(2+). Residue H15 coordinates ATP. Residue E43 coordinates K(+). L-methionine-binding residues include E56 and Q99. ATP-binding positions include 167-169 (DGK), 235-238 (SGRF), D246, 252-253 (RK), A269, K273, and K277. D246 contacts L-methionine. K277 is an L-methionine binding site.

This sequence belongs to the AdoMet synthase family. In terms of assembly, homotetramer. Interacts with GRF3. It depends on Mn(2+) as a cofactor. Mg(2+) is required as a cofactor. Requires Co(2+) as cofactor. The cofactor is K(+).

It is found in the cytoplasm. It catalyses the reaction L-methionine + ATP + H2O = S-adenosyl-L-methionine + phosphate + diphosphate. It participates in amino-acid biosynthesis; S-adenosyl-L-methionine biosynthesis; S-adenosyl-L-methionine from L-methionine: step 1/1. Inhibited by 5,5'-dithiobis-2-nitrobenzoic acid (DTNB) and N-ethylmaleimide (NEM) (in vitro). In terms of biological role, catalyzes the formation of S-adenosylmethionine from methionine and ATP. The reaction comprises two steps that are both catalyzed by the same enzyme: formation of S-adenosylmethionine (AdoMet) and triphosphate, and subsequent hydrolysis of the triphosphate. Involved in the biosynthesis of lignin. The polypeptide is S-adenosylmethionine synthase 3 (METK3) (Arabidopsis thaliana (Mouse-ear cress)).